We begin with the raw amino-acid sequence, 265 residues long: NAD kinase 1 (265 aa).

Asp-45 (proton acceptor) is an active-site residue. NAD(+)-binding positions include 45–46, 122–123, Arg-148, Asp-150, and Ala-185; these read DG and NE.

It belongs to the NAD kinase family. It depends on a divalent metal cation as a cofactor.

The protein resides in the cytoplasm. It catalyses the reaction NAD(+) + ATP = ADP + NADP(+) + H(+). Involved in the regulation of the intracellular balance of NAD and NADP, and is a key enzyme in the biosynthesis of NADP. Catalyzes specifically the phosphorylation on 2'-hydroxyl of the adenosine moiety of NAD to yield NADP. In Bacillus cereus (strain ATCC 10987 / NRS 248), this protein is NAD kinase 1.